The following is a 957-amino-acid chain: Valine--tRNA ligase (957 aa).

Residues 45-55 carry the 'HIGH' region motif; that stretch reads PNVTGSLHMGH. The short motif at 571 to 575 is the 'KMSKS' region element; that stretch reads KMSKS. An ATP-binding site is contributed by lysine 574. A coiled-coil region spans residues 887 to 946; sequence VVDFAAEQARLEKELGKAEADIKRAEAKLANEKFVANAAEEVVEEEREKREAAVARKVKI.

The protein belongs to the class-I aminoacyl-tRNA synthetase family. ValS type 1 subfamily. As to quaternary structure, monomer.

It is found in the cytoplasm. It carries out the reaction tRNA(Val) + L-valine + ATP = L-valyl-tRNA(Val) + AMP + diphosphate. Functionally, catalyzes the attachment of valine to tRNA(Val). As ValRS can inadvertently accommodate and process structurally similar amino acids such as threonine, to avoid such errors, it has a 'posttransfer' editing activity that hydrolyzes mischarged Thr-tRNA(Val) in a tRNA-dependent manner. The protein is Valine--tRNA ligase of Rhodopseudomonas palustris (strain ATCC BAA-98 / CGA009).